We begin with the raw amino-acid sequence, 172 residues long: MKIWSSEHVFGHPWDTVIQAAMRKYPNPMNPSVLGVDVLQRRVDGRGRLHSLRLLSTEWGLPSLVRAILGTSRTLTYIREHSVVDPVEKKMELCSTNITLTNLVSVNERLVYTPHPENPEMTVLTQEAIITVKGISLGSYLESLMANTISSNAKKGWAAIEWIIEHSESAVS.

The PRELI/MSF1 domain occupies 1-172 (MKIWSSEHVF…IIEHSESAVS (172 aa)).

Belongs to the slowmo family. Interacts with TRIAP1.

The protein localises to the mitochondrion. Its function is as follows. In vitro, the TRIAP1:PRELID3A complex mediates the transfer of phosphatidic acid (PA) between liposomes and probably functions as a PA transporter across the mitochondrion intermembrane space. Phosphatidic acid import is required for cardiolipin (CL) synthesis in the mitochondrial inner membrane. This chain is PRELI domain containing protein 3A (PRELID3A), found in Homo sapiens (Human).